We begin with the raw amino-acid sequence, 1786 residues long: Transcription initiation factor TFIID subunit 1b (1786 aa).

Disordered stretches follow at residues 54-83 and 350-372; these read EDYD…PVVL and FGSR…PQLL. Basic and acidic residues predominate over residues 61–83; sequence GQEKEHVPVEKSFDSEEREPVVL. The span at 352 to 362 shows a compositional bias: polar residues; it reads SRGSQSTNEST. The region spanning 574–650 is the Ubiquitin-like domain; that stretch reads MTIVVKSLGG…VHLLRTKVHL (77 aa). Basic residues predominate over residues 1303-1313; that stretch reads MKTNKHCPKYR. Disordered stretches follow at residues 1303–1382, 1397–1471, and 1596–1634; these read MKTN…DVAA, LKIS…KDQA, and SERE…ESGQ. A compositionally biased stretch (polar residues) spans 1357–1377; it reads TKISVNEATKVGDSTSKTPGS. Positions 1397–1407 are enriched in basic residues; the sequence is LKISSKAKPKA. Residues 1433–1464 show a composition bias toward polar residues; that stretch reads HNPSVSGQLLPSTETDQAASSRYTTSVPQPSL. 2 coiled-coil regions span residues 1591 to 1620 and 1752 to 1786; these read REVI…LENY and LADE…DSLR. Over residues 1604–1613 the composition is skewed to basic residues; the sequence is RKAKQKKKLQ. Positions 1656–1774 constitute a Bromo domain; that stretch reads KRRKKGQVGL…DEYRDELKEA (119 aa).

The protein belongs to the TAF1 family. Component of the TFIID complex. TFIID is composed of TATA binding protein (TBP) and a number of TBP-associated factors (TAFs) whose MWs range from 14-217 kDa. In terms of tissue distribution, expressed in roots, shoots, leaves and inflorescences.

It localises to the nucleus. In terms of biological role, TAFs are components of the transcription factor IID (TFIID) complex that is essential for mediating regulation of RNA polymerase transcription. Core scaffold of the TFIID complex. Acts as a histone acetyltransferase involved in the light regulation of growth and gene expression. Required for H3K9, H3K27, and H4K12 acetylation on the target promoters. The polypeptide is Transcription initiation factor TFIID subunit 1b (TAF1B) (Arabidopsis thaliana (Mouse-ear cress)).